The sequence spans 829 residues: MAPVSTVVKNAISDLAKISDGERLREALLSLKSYLGTGENSAQTQETTEFNRNHYTPVLEFLVAQIGPQWLDLLTSERLELWDSFFLEGPPDQAFLVLMDSLGKTGPSIRLDRCVHVLERFLQRGALAEVIWEVCQQQLESNPTSVLHEAILGRISSLPDHLANCLQQHNKPLFYPKNYYPRLAGSIIRVLQMVSDALRDGKNCSISFASQVVGKVCMQGRQKELLSVLVPRLKSLVQSDCIWQRICWRLLESVPDRWMEPVLTGIVQTAPGAEVLSQLLGDLVVKNKRTQFLLTKKMLFLQYGLKKDALQSILGYLSLDASRRHLLVKVLRELLEVWSSGSVVKHSPHPQLLHVSRCLLICLGLLNKQEIESCKQDLLVSLTSGARNYLDSSVPTTRRMGMVVAECLSHHIDTEGPGLSFQYEEDEDTRDLKALLKPPHMVETDSADFVKRPVESSPSKSPLSSPEVREKSKVKVKADQASDSDLDSDDDLVPYDMSADTELKKSKAPAYIRDCIEVLLSDDVEKLEVTMASLATLIQANTLATKEVSMELAKILLHIDEKPSVARFTELRHAALVAVTVTDPVTVSQYLTSEFYSLNYSLRQRMDILDVLSSAAQSLSEKPSHETSAESGSVNTDPHSIRSTAWTSSEVPVNWRKVVEERIASKTRRFAKGHSAATPVPAPNRYHAVAGHFFFPLIQNYDRQIVTFDLLGEDRLVLGRMVHTLGILMHLTLNAPIASQMGKALLEFVWVLRSHTDAFVRQGLLFCISTVLLSVPWEHLMTDMAEEVVETQCWLAEVAERDSDDDCRRLALNGLFLMEKLRSNIQGNP.

2 disordered regions span residues 446 to 493 (SADF…DDLV) and 620 to 641 (SEKPSHETSAESGSVNTDPHSI). Low complexity predominate over residues 456 to 466 (SSPSKSPLSSP). The segment covering 467 to 480 (EVREKSKVKVKADQ) has biased composition (basic and acidic residues). Over residues 482-493 (SDSDLDSDDDLV) the composition is skewed to acidic residues. Residues 629-641 (AESGSVNTDPHSI) are compositionally biased toward polar residues.

The protein belongs to the TEL2 family.

Its subcellular location is the cytoplasm. The protein localises to the membrane. It is found in the nucleus. The protein resides in the chromosome. It localises to the telomere. Its function is as follows. Regulator of the DNA damage response (DDR). Part of the TTT complex that is required to stabilize protein levels of the phosphatidylinositol 3-kinase-related protein kinase (PIKK) family proteins. Promotes assembly, stabilizes and maintains the activity of TORC complexes, which regulate cell growth and survival in response to nutrient and hormonal signals. May be involved in telomere length regulation. This is Telomere length regulation protein TEL2 homolog (telo2) from Xenopus tropicalis (Western clawed frog).